Consider the following 443-residue polypeptide: Thymidine phosphorylase (443 aa).

Belongs to the thymidine/pyrimidine-nucleoside phosphorylase family. Homodimer.

It catalyses the reaction thymidine + phosphate = 2-deoxy-alpha-D-ribose 1-phosphate + thymine. It functions in the pathway pyrimidine metabolism; dTMP biosynthesis via salvage pathway; dTMP from thymine: step 1/2. Functionally, the enzymes which catalyze the reversible phosphorolysis of pyrimidine nucleosides are involved in the degradation of these compounds and in their utilization as carbon and energy sources, or in the rescue of pyrimidine bases for nucleotide synthesis. The polypeptide is Thymidine phosphorylase (Aeromonas salmonicida (strain A449)).